A 620-amino-acid chain; its full sequence is Protein CNGC15b (620 aa).

Helical transmembrane passes span Ile-73–Ile-93, Ile-102–Val-122, Gly-161–Ile-181, Phe-198–Ile-218, Leu-237–Glu-257, and Gly-356–Ile-376. Residue Leu-462–Ser-559 participates in a nucleoside 3',5'-cyclic phosphate binding.

This sequence belongs to the cyclic nucleotide-gated cation channel (TC 1.A.1.5) family. As to quaternary structure, interacts (via N-terminus) with DMI1 (via c-terminus). The Nod factor has no effect on this interaction, implying that the complex is maintained after activation. As to expression, expressed in roots, stems, leaves, flowers and pods.

Its subcellular location is the nucleus membrane. Functionally, cyclic nucleotide-gated channel involved in the establishment of both rhizobial and mycorrhizal associations. Required for full activation of nuclear-localized Ca(2+) oscillations by Nod and Myc factors. Simultaneous activation of the K(+)-permeable channel DMI1 and the Ca(2+) channel CNGC15 can give rise to sustained Ca(2+) oscillations. May function during fertilization in both female and male gametophytic Ca(2+) signaling. In Medicago truncatula (Barrel medic), this protein is Protein CNGC15b.